The following is a 370-amino-acid chain: Glutamine synthetase (370 aa).

The residue at position 2 (Ala2) is an N-acetylalanine. A Phosphoserine modification is found at Ser5. One can recognise a GS beta-grasp domain in the interval 24–103; that stretch reads IIAEYVWIDG…VLAACYNNDG (80 aa). The 261-residue stretch at 110 to 370 folds into the GS catalytic domain; sequence HRHEAAKLFA…MTKEFERESS (261 aa). Residues Lys283, Lys324, and Lys363 each participate in a glycyl lysine isopeptide (Lys-Gly) (interchain with G-Cter in ubiquitin) cross-link.

It belongs to the glutamine synthetase family. As to quaternary structure, homooctamer.

It is found in the cytoplasm. It carries out the reaction L-glutamate + NH4(+) + ATP = L-glutamine + ADP + phosphate + H(+). This is Glutamine synthetase (GLN1) from Saccharomyces cerevisiae (strain ATCC 204508 / S288c) (Baker's yeast).